The sequence spans 159 residues: SsrA-binding protein (159 aa).

Positions Lys132–Asp159 are disordered.

The protein belongs to the SmpB family.

The protein localises to the cytoplasm. In terms of biological role, required for rescue of stalled ribosomes mediated by trans-translation. Binds to transfer-messenger RNA (tmRNA), required for stable association of tmRNA with ribosomes. tmRNA and SmpB together mimic tRNA shape, replacing the anticodon stem-loop with SmpB. tmRNA is encoded by the ssrA gene; the 2 termini fold to resemble tRNA(Ala) and it encodes a 'tag peptide', a short internal open reading frame. During trans-translation Ala-aminoacylated tmRNA acts like a tRNA, entering the A-site of stalled ribosomes, displacing the stalled mRNA. The ribosome then switches to translate the ORF on the tmRNA; the nascent peptide is terminated with the 'tag peptide' encoded by the tmRNA and targeted for degradation. The ribosome is freed to recommence translation, which seems to be the essential function of trans-translation. This is SsrA-binding protein from Pseudomonas aeruginosa (strain LESB58).